The sequence spans 79 residues: MSQEILEKVCSIVSEQLSVEAGEVKSDSNFQNDLGADSLDTVELVMALEEAFDIEIPDEAAEGIATVGDAVKFIEEKKG.

Residues 3-78 enclose the Carrier domain; sequence QEILEKVCSI…DAVKFIEEKK (76 aa). Ser38 is modified (O-(pantetheine 4'-phosphoryl)serine).

Belongs to the acyl carrier protein (ACP) family. 4'-phosphopantetheine is transferred from CoA to a specific serine of apo-ACP by AcpS. This modification is essential for activity because fatty acids are bound in thioester linkage to the sulfhydryl of the prosthetic group.

The protein localises to the cytoplasm. The protein operates within lipid metabolism; fatty acid biosynthesis. Its function is as follows. Carrier of the growing fatty acid chain in fatty acid biosynthesis. The sequence is that of Acyl carrier protein from Prochlorococcus marinus (strain MIT 9301).